The chain runs to 207 residues: Guanylate kinase (207 aa).

The Guanylate kinase-like domain maps to 5-184; sequence GNLFIVSAPS…ALADLKSIIF (180 aa). 12-19 provides a ligand contact to ATP; that stretch reads APSGAGKS.

This sequence belongs to the guanylate kinase family.

The protein resides in the cytoplasm. The enzyme catalyses GMP + ATP = GDP + ADP. Its function is as follows. Essential for recycling GMP and indirectly, cGMP. This Shewanella denitrificans (strain OS217 / ATCC BAA-1090 / DSM 15013) protein is Guanylate kinase.